We begin with the raw amino-acid sequence, 260 residues long: Pyridoxine 5'-phosphate synthase (260 aa).

Residues Asn10 and Arg21 each coordinate 3-amino-2-oxopropyl phosphate. The active-site Proton acceptor is the His46. Positions 48 and 53 each coordinate 1-deoxy-D-xylulose 5-phosphate. Glu76 (proton acceptor) is an active-site residue. Thr113 is a binding site for 1-deoxy-D-xylulose 5-phosphate. Residue His204 is the Proton donor of the active site. 3-amino-2-oxopropyl phosphate contacts are provided by residues Asp205 and 227–228; that span reads GH.

The protein belongs to the PNP synthase family. Homooctamer; tetramer of dimers.

It localises to the cytoplasm. It carries out the reaction 3-amino-2-oxopropyl phosphate + 1-deoxy-D-xylulose 5-phosphate = pyridoxine 5'-phosphate + phosphate + 2 H2O + H(+). The protein operates within cofactor biosynthesis; pyridoxine 5'-phosphate biosynthesis; pyridoxine 5'-phosphate from D-erythrose 4-phosphate: step 5/5. Catalyzes the complicated ring closure reaction between the two acyclic compounds 1-deoxy-D-xylulose-5-phosphate (DXP) and 3-amino-2-oxopropyl phosphate (1-amino-acetone-3-phosphate or AAP) to form pyridoxine 5'-phosphate (PNP) and inorganic phosphate. The chain is Pyridoxine 5'-phosphate synthase from Xylella fastidiosa (strain 9a5c).